The following is a 431-amino-acid chain: Serine/threonine-protein kinase Sgk1 (431 aa).

The segment at Met1–Ile60 is necessary for localization to the mitochondria. Residues Pro66–His92 form a disordered region. Ser74 carries the phosphoserine modification. Ser78 bears the Phosphoserine; by MAPK7 mark. Over residues Gln81–Pro91 the composition is skewed to polar residues. In terms of domain architecture, Protein kinase spans Phe98–Phe355. Residues Ile104–Val112 and Lys127 each bind ATP. The Nuclear localization signal signature appears at Lys131–Lys141. Asp222 acts as the Proton acceptor in catalysis. Thr256 bears the Phosphothreonine; by PDPK1 mark. The 76-residue stretch at Ser356 to Leu431 folds into the AGC-kinase C-terminal domain. Thr369 is subject to Phosphothreonine; by PKA. Ser397, Ser401, and Ser422 each carry phosphoserine.

Belongs to the protein kinase superfamily. AGC Ser/Thr protein kinase family. Homodimer; disulfide-linked. Forms a trimeric complex with FBXW7 and NOTCH1. Interacts with MAPK3/ERK1, MAPK1/ERK2, MAP2K1/MEK1, MAP2K2/MEK2, NEDD4, NEDD4L, MAPT/TAU, MAPK7, CREB1, SLC9A3R2/NHERF2 and KCNJ1/ROMK1. Associates with the mammalian target of rapamycin complex 2 (mTORC2) via an interaction with MAPKAP1/SIN1. Post-translationally, regulated by phosphorylation. Activated by phosphorylation on Ser-422 by mTORC2, transforming it into a substrate for PDPK1 which phosphorylates it on Thr-256. Phosphorylation on Ser-397 and Ser-401 are also essential for its activity. Phosphorylation on Ser-78 by MAPK7 is required for growth factor-induced cell cycle progression. In terms of processing, ubiquitinated by NEDD4L; which promotes proteasomal degradation. Ubiquitinated by SYVN1 at the endoplasmic reticulum; which promotes rapid proteasomal degradation and maintains a high turnover rate in resting cells.

The protein resides in the cytoplasm. It localises to the nucleus. Its subcellular location is the endoplasmic reticulum membrane. It is found in the cell membrane. The protein localises to the mitochondrion. The enzyme catalyses L-seryl-[protein] + ATP = O-phospho-L-seryl-[protein] + ADP + H(+). The catalysed reaction is L-threonyl-[protein] + ATP = O-phospho-L-threonyl-[protein] + ADP + H(+). Its activity is regulated as follows. Two specific sites, one in the kinase domain (Thr-256) and the other in the C-terminal regulatory region (Ser-422), need to be phosphorylated for its full activation. Phosphorylation at Ser-397 and Ser-401 are also essential for its activity. Activated by WNK1, WNK2, WNK3 and WNK4; which promote phosphorylation by mTORC2. Its function is as follows. Serine/threonine-protein kinase which is involved in the regulation of a wide variety of ion channels, membrane transporters, cellular enzymes, transcription factors, neuronal excitability, cell growth, proliferation, survival, migration and apoptosis. Plays an important role in cellular stress response. Contributes to regulation of renal Na(+) retention, renal K(+) elimination, salt appetite, gastric acid secretion, intestinal Na(+)/H(+) exchange and nutrient transport, insulin-dependent salt sensitivity of blood pressure, salt sensitivity of peripheral glucose uptake, cardiac repolarization and memory consolidation. Up-regulates Na(+) channels: SCNN1A/ENAC, SCN5A and ASIC1/ACCN2, K(+) channels: KCNJ1/ROMK1, KCNA1-5, KCNQ1-5 and KCNE1, epithelial Ca(2+) channels: TRPV5 and TRPV6, chloride channels: BSND, CLCN2 and CFTR, glutamate transporters: SLC1A3/EAAT1, SLC1A2 /EAAT2, SLC1A1/EAAT3, SLC1A6/EAAT4 and SLC1A7/EAAT5, amino acid transporters: SLC1A5/ASCT2, SLC38A1/SN1 and SLC6A19, creatine transporter: SLC6A8, Na(+)/dicarboxylate cotransporter: SLC13A2/NADC1, Na(+)-dependent phosphate cotransporter: SLC34A2/NAPI-2B, glutamate receptor: GRIK2/GLUR6. Up-regulates carriers: SLC9A3/NHE3, SLC12A1/NKCC2, SLC12A3/NCC, SLC5A3/SMIT, SLC2A1/GLUT1, SLC5A1/SGLT1 and SLC15A2/PEPT2. Regulates enzymes: GSK3A/B, PMM2 and Na(+)/K(+) ATPase, and transcription factors: CTNNB1 and nuclear factor NF-kappa-B. Stimulates sodium transport into epithelial cells by enhancing the stability and expression of SCNN1A/ENAC. This is achieved by phosphorylating the NEDD4L ubiquitin E3 ligase, promoting its interaction with 14-3-3 proteins, thereby preventing it from binding to SCNN1A/ENAC and targeting it for degradation. Regulates store-operated Ca(+2) entry (SOCE) by stimulating ORAI1 and STIM1. Regulates KCNJ1/ROMK1 directly via its phosphorylation or indirectly via increased interaction with SLC9A3R2/NHERF2. Phosphorylates MDM2 and activates MDM2-dependent ubiquitination of p53/TP53. Phosphorylates MAPT/TAU and mediates microtubule depolymerization and neurite formation in hippocampal neurons. Phosphorylates SLC2A4/GLUT4 and up-regulates its activity. Phosphorylates APBB1/FE65 and promotes its localization to the nucleus. Phosphorylates MAPK1/ERK2 and activates it by enhancing its interaction with MAP2K1/MEK1 and MAP2K2/MEK2. Phosphorylates FBXW7 and plays an inhibitory role in the NOTCH1 signaling. Phosphorylates FOXO1 resulting in its relocalization from the nucleus to the cytoplasm. Phosphorylates FOXO3, promoting its exit from the nucleus and interference with FOXO3-dependent transcription. Phosphorylates BRAF and MAP3K3/MEKK3 and inhibits their activity. Phosphorylates SLC9A3/NHE3 in response to dexamethasone, resulting in its activation and increased localization at the cell membrane. Phosphorylates CREB1. Necessary for vascular remodeling during angiogenesis. The chain is Serine/threonine-protein kinase Sgk1 (SGK1) from Macaca fascicularis (Crab-eating macaque).